We begin with the raw amino-acid sequence, 559 residues long: GTP diphosphokinase CRSH2, chloroplastic (559 aa).

Residues 1-37 (MASAGGEVVVVDPAAAAVAPDVEHHAPAPRLTPAGSG) constitute a chloroplast transit peptide. The HD domain occupies 87–187 (SLARALIVAA…LELAIRLDAM (101 aa)). 2 consecutive EF-hand domains span residues 449–484 (ASAGNIERAFRLLDKNGDGRISMEELTELMEDLGAG) and 486–518 (KDAEELMRLLDDNNDGSLSSDEFALFQKRVELK). Ca(2+) contacts are provided by Asp462, Asn464, Asp466, Arg468, Glu473, Asp496, Asn498, Asp500, Ser502, and Glu507.

The protein belongs to the RelA/SpoT family. In terms of tissue distribution, expressed in shoots.

Its subcellular location is the plastid. The protein resides in the chloroplast. The catalysed reaction is GTP + ATP = guanosine 3'-diphosphate 5'-triphosphate + AMP. With respect to regulation, activated by calcium. Possesses calcium-dependent ppGpp (guanosine 3'-diphosphate 5'-diphosphate) synthetase activity in vitro and is able to functionally complement E.coli relA mutants. May be involved in a rapid plant ppGpp-mediated response to pathogens and other stresses. The protein is GTP diphosphokinase CRSH2, chloroplastic of Oryza sativa subsp. japonica (Rice).